The primary structure comprises 512 residues: Pentatricopeptide repeat-containing protein At1g64583, mitochondrial (512 aa).

Residues 1–34 (MRRLIVTGIATSTAKGFRRVVNPNLLGGGAAARA) constitute a mitochondrion transit peptide. PPR repeat units follow at residues 70 to 104 (SIVD…GISH), 105 to 139 (DLYS…GYEP), 140 to 174 (SIVT…GYEP), 175 to 209 (NVVV…GLGA), 210 to 244 (DVVT…SINP), 245 to 279 (DVVT…SVDP), 280 to 314 (NNVT…GCFP), 315 to 349 (NVVT…GFNA), 350 to 384 (DIFT…RVTP), 385 to 415 (DIIT…MRES), 420 to 454 (GIVA…GVKP), and 455 to 489 (DART…GIIC).

The protein belongs to the PPR family. P subfamily.

It is found in the mitochondrion. The polypeptide is Pentatricopeptide repeat-containing protein At1g64583, mitochondrial (Arabidopsis thaliana (Mouse-ear cress)).